The following is a 1030-amino-acid chain: MTTGRNNRVMMEGVGARVIRGPDWKWGKQDGGEGHVGTVRSFESPEEVVVVWDNGTAANYRCSGAYDVRILDSAPTGIKHDGTMCDTCRQQPIIGIRWKCAECTNYDLCTTCYHGDKHHLRHRFYRITTPGSERVLLESRRKSKKITARGIFAGGRVVRGVDWQWEDQDGGNGRRGKVTEIQDWSAASPHSAAYVLWDNGAKNLYRVGFEGMSDLKCVQDAKGGTFYRDHCPVLGEQNGNRNPGGLQIGDLVNIDLDLEIVQSLQHGHGGWTDGMFETLTTTGTVCGIDEDHDIVVQYPSGNRWTFNPAVLTKANVVRSGEVAAGAEGGSSQFMVGDLVQICYDIDRIKLLQRGHGEWAEAMLPTLGKVGRVQQIYSDSDLKVEVCGTSWTYNPAAVTKVAPAGSAVTNASGERLSQLLKKLFETQESGDINEELVKAAANGDLAKVEDILKRPDVDVNGQCAGHTAMQAASQNGHVDVLKLLLKHSVDLEAEDKDGDRAVHHASFGDEGSVIEVLHRGGADLNARNKRRQTPLHIAVNKGHLQVVKTLLDFGCHPSLQDSEGDTPLHDAISKKRDDMLSVLLEAGADVTITNNNGFNALHHAALRGNPSAMRVLLSKLPRPWIVDEKKDDGYTALHLAALNNHVEVAELLVHQGNANLDVQNVNQQTALHLAVERQHTQIVRLLVRAEAKLDVQDKDGDTPLHEALRHHTLSQLRQLQDMQDVSKVEPWEPSKNTLIMGLGTQGAEKKSAASIACFLAANGADLTIRNKKGQSPLDLCPDPSLCKALAKCHKEKTSGQVGSRSPSLNSNNETLEECMVCSDMKRDTLFGPCGHIATCSLCSPRVKKCLICKEQVQSRTKIEECVVCSDKKAAVLFQPCGHMCACENCASLMKKCVQCRAVVERRTPFVLCCGGKGMEDATDDEDLTGGSNSMAGGSQDLLQPNNLALSWSSGNIPALQRDKDNTNVNADVQKLQQQLQDIKEQTMCPVCLDRLKNMIFMCGHGTCQLCGDRMSECPICRKAIERRILLY.

The MIB/HERC2 1 domain maps to 6-74; that stretch reads NNRVMMEGVG…AYDVRILDSA (69 aa). The ZZ-type zinc finger occupies 80 to 132; sequence HDGTMCDTCRQQPIIGIRWKCAECTNYDLCTTCYHGDKHHLRHRFYRITTPGS. Residues C85, C88, C100, C103, C109, C112, H118, and H122 each coordinate Zn(2+). The MIB/HERC2 2 domain occupies 143 to 221; that stretch reads SKKITARGIF…MSDLKCVQDA (79 aa). ANK repeat units follow at residues 430–460, 463–492, 496–525, 529–558, 562–591, 595–627, 631–661, 665–694, and 698–727; these read DINEELVKAAANGDLAKVEDILKRPDVDVNG, AGHTAMQAASQNGHVDVLKLLLKHSVDLEA, DGDRAVHHASFGDEGSVIEVLHRGGADLNA, RRQTPLHIAVNKGHLQVVKTLLDFGCHPSL, EGDTPLHDAISKKRDDMLSVLLEAGADVTI, NGFNALHHAALRGNPSAMRVLLSKLPRPWIVDE, DGYTALHLAALNNHVEVAELLVHQGNANLDV, NQQTALHLAVERQHTQIVRLLVRAEAKLDV, and DGDTPLHEALRHHTLSQLRQLQDMQDVSKV. 2 RING-type zinc fingers span residues 817–852 and 864–899; these read CMVCSDMKRDTLFGPCGHIATCSLCSPRVKKCLICK and CVVCSDKKAAVLFQPCGHMCACENCASLMKKCVQCR. Positions 957-986 form a coiled coil; sequence ALQRDKDNTNVNADVQKLQQQLQDIKEQTM. The RING-type 3 zinc-finger motif lies at 987 to 1020; the sequence is CPVCLDRLKNMIFMCGHGTCQLCGDRMSECPICR.

In terms of assembly, interacts with deltaA (dla) and deltaD (dld).

The protein localises to the cytoplasm. It is found in the cytoskeleton. Its subcellular location is the microtubule organizing center. The protein resides in the centrosome. It localises to the centriolar satellite. The protein localises to the cell membrane. The enzyme catalyses S-ubiquitinyl-[E2 ubiquitin-conjugating enzyme]-L-cysteine + [acceptor protein]-L-lysine = [E2 ubiquitin-conjugating enzyme]-L-cysteine + N(6)-ubiquitinyl-[acceptor protein]-L-lysine.. Its pathway is protein modification; protein ubiquitination. Functionally, E3 ubiquitin-protein ligase that mediates ubiquitination of Delta receptors, which act as ligands of Notch proteins. Positively regulates the Delta-mediated Notch signaling by ubiquitinating the intracellular domain of Delta, leading to endocytosis of Delta receptors. It thereby participates in many processes regulated by the Notch signaling pathway, such as midline cell fate specification prior to germ layer formation, patterning of sensory cell differentiation in the ear, neurogenesis of the hindbrain and commitment to a secretory fate in the intestine. Essential for early embryonic development. The chain is E3 ubiquitin-protein ligase mib1 (mib1) from Danio rerio (Zebrafish).